The primary structure comprises 119 residues: Basic phospholipase A2 notechis II-5 (119 aa).

7 cysteine pairs are disulfide-bonded: cysteine 11-cysteine 71, cysteine 27-cysteine 118, cysteine 29-cysteine 45, cysteine 44-cysteine 99, cysteine 51-cysteine 92, cysteine 60-cysteine 85, and cysteine 78-cysteine 90. Positions 28, 30, and 32 each coordinate Ca(2+). Histidine 48 is an active-site residue. Residue aspartate 49 coordinates Ca(2+). Residue aspartate 93 is part of the active site.

The protein belongs to the phospholipase A2 family. Group I subfamily. D49 sub-subfamily. Ca(2+) is required as a cofactor. Expressed by the venom gland.

It is found in the secreted. The enzyme catalyses a 1,2-diacyl-sn-glycero-3-phosphocholine + H2O = a 1-acyl-sn-glycero-3-phosphocholine + a fatty acid + H(+). In terms of biological role, snake venom phospholipase A2 (PLA2) that inhibits neuromuscular transmission by blocking acetylcholine release from the nerve termini. Notechis II-5 is less toxic than notexin but has a higher specific phospholipase activity. PLA2 catalyzes the calcium-dependent hydrolysis of the 2-acyl groups in 3-sn-phosphoglycerides. This chain is Basic phospholipase A2 notechis II-5, found in Notechis scutatus scutatus (Mainland tiger snake).